We begin with the raw amino-acid sequence, 277 residues long: Large ribosomal subunit protein mL46 (277 aa).

N6-acetyllysine is present on K228.

Belongs to the mitochondrion-specific ribosomal protein mL46 family. In terms of assembly, component of the mitochondrial ribosome large subunit (39S) which comprises a 16S rRNA and about 50 distinct proteins.

It localises to the mitochondrion. This chain is Large ribosomal subunit protein mL46 (MRPL46), found in Bos taurus (Bovine).